Consider the following 455-residue polypeptide: Probable glycine dehydrogenase (decarboxylating) subunit 1 (455 aa).

This sequence belongs to the GcvP family. N-terminal subunit subfamily. The glycine cleavage system is composed of four proteins: P, T, L and H. In this organism, the P 'protein' is a heterodimer of two subunits.

The catalysed reaction is N(6)-[(R)-lipoyl]-L-lysyl-[glycine-cleavage complex H protein] + glycine + H(+) = N(6)-[(R)-S(8)-aminomethyldihydrolipoyl]-L-lysyl-[glycine-cleavage complex H protein] + CO2. Functionally, the glycine cleavage system catalyzes the degradation of glycine. The P protein binds the alpha-amino group of glycine through its pyridoxal phosphate cofactor; CO(2) is released and the remaining methylamine moiety is then transferred to the lipoamide cofactor of the H protein. This is Probable glycine dehydrogenase (decarboxylating) subunit 1 from Francisella philomiragia subsp. philomiragia (strain ATCC 25017 / CCUG 19701 / FSC 153 / O#319-036).